A 206-amino-acid chain; its full sequence is 3-isopropylmalate dehydratase small subunit (206 aa).

It belongs to the LeuD family. LeuD type 1 subfamily. In terms of assembly, heterodimer of LeuC and LeuD.

The enzyme catalyses (2R,3S)-3-isopropylmalate = (2S)-2-isopropylmalate. Its pathway is amino-acid biosynthesis; L-leucine biosynthesis; L-leucine from 3-methyl-2-oxobutanoate: step 2/4. Functionally, catalyzes the isomerization between 2-isopropylmalate and 3-isopropylmalate, via the formation of 2-isopropylmaleate. The polypeptide is 3-isopropylmalate dehydratase small subunit (Leptospira interrogans serogroup Icterohaemorrhagiae serovar copenhageni (strain Fiocruz L1-130)).